We begin with the raw amino-acid sequence, 136 residues long: MTDRLSPERRRYLMQQVRSKNTRPEKAVRSLLHSIGYRFRLHRKDLPGTPDIVFPSRRLVLFVHGCFWHGHGCRIGQLPKSRLDYWSPKIEANRARDQRKEAALAAEGWRVAVVWQCELSDLGALEARLRNILDPS.

It belongs to the Vsr family.

Its function is as follows. May nick XorII sequences that contain T/G mispairs resulting from m5C-deamination. If unrepaired, these mismatches can lead to C-to-T transition mutations. The very short patch (VSP) repair process counteracts the mutagenic process by repairing the mismatches in favor of the G-containing strand. This enzyme is an endonuclease that nicks double-stranded DNA within the sequence CGATCG (C-methylation site unknown) next to the thymidine residue that is mismatched to 2'-deoxyguanosine. The incision is mismatch-dependent and strand-specific. The chain is Type II nicking enzyme V.XorIIP from Xanthomonas oryzae pv. oryzae (strain KACC10331 / KXO85).